The primary structure comprises 329 residues: BRISC and BRCA1-A complex member 1 (329 aa).

Met1 carries the N-acetylmethionine modification. The disordered stretch occupies residues 1-86 (MEVAEPSSPT…PPAPEVQIRT (86 aa)). Position 8 is a phosphoserine (Ser8). Acidic residues predominate over residues 10–19 (TEEEEEEEEH). A phosphoserine mark is found at Ser29, Ser49, Ser57, and Ser62. A Phosphothreonine modification is found at Thr65. Ser66 is subject to Phosphoserine. Residues 95–298 (VIICLDLSEE…LELHNCMVKL (204 aa)) form a VWFA-like region.

It belongs to the BABAM1 family. As to quaternary structure, component of the ARISC complex, at least composed of UIMC1/RAP80, ABRAXAS1, BRCC3/BRCC36, BABAM2 and BABAM1/NBA1. Component of the BRCA1-A complex, at least composed of BRCA1, BARD1, UIMC1/RAP80, ABRAXAS1, BRCC3/BRCC36, BABAM2 and BABAM1/NBA1. In the BRCA1-A complex, interacts directly with ABRAXAS1 and BABAM2. Component of the BRISC complex, at least composed of ABRAXAS2, BRCC3/BRCC36, BABAM2 and BABAM1/NBA1. Identified in a complex with SHMT2 and the other subunits of the BRISC complex.

Its subcellular location is the cytoplasm. The protein localises to the nucleus. In terms of biological role, component of the BRCA1-A complex, a complex that specifically recognizes 'Lys-63'-linked ubiquitinated histones H2A and H2AX at DNA lesions sites, leading to target the BRCA1-BARD1 heterodimer to sites of DNA damage at double-strand breaks (DSBs). The BRCA1-A complex also possesses deubiquitinase activity that specifically removes 'Lys-63'-linked ubiquitin on histones H2A and H2AX. In the BRCA1-A complex, it is required for the complex integrity and its localization at DSBs. Component of the BRISC complex, a multiprotein complex that specifically cleaves 'Lys-63'-linked ubiquitin in various substrates. In these 2 complexes, it is probably required to maintain the stability of BABAM2 and help the 'Lys-63'-linked deubiquitinase activity mediated by BRCC3/BRCC36 component. The BRISC complex is required for normal mitotic spindle assembly and microtubule attachment to kinetochores via its role in deubiquitinating NUMA1. Plays a role in interferon signaling via its role in the deubiquitination of the interferon receptor IFNAR1; deubiquitination increases IFNAR1 activity by enhancing its stability and cell surface expression. Down-regulates the response to bacterial lipopolysaccharide (LPS) via its role in IFNAR1 deubiquitination. The polypeptide is BRISC and BRCA1-A complex member 1 (BABAM1) (Callithrix jacchus (White-tufted-ear marmoset)).